Here is a 316-residue protein sequence, read N- to C-terminus: Ferrochelatase (316 aa).

Fe cation contacts are provided by histidine 186 and glutamate 268.

The protein belongs to the ferrochelatase family.

It is found in the cytoplasm. The enzyme catalyses heme b + 2 H(+) = protoporphyrin IX + Fe(2+). Its pathway is porphyrin-containing compound metabolism; protoheme biosynthesis; protoheme from protoporphyrin-IX: step 1/1. Its function is as follows. Catalyzes the ferrous insertion into protoporphyrin IX. In Deinococcus radiodurans (strain ATCC 13939 / DSM 20539 / JCM 16871 / CCUG 27074 / LMG 4051 / NBRC 15346 / NCIMB 9279 / VKM B-1422 / R1), this protein is Ferrochelatase.